We begin with the raw amino-acid sequence, 152 residues long: Small ribosomal subunit protein uS11 (152 aa).

Residues 133–152 (VTPIPTDSTRRKSGHRGRRL) are disordered. A compositionally biased stretch (basic residues) spans 143–152 (RKSGHRGRRL).

This sequence belongs to the universal ribosomal protein uS11 family. As to quaternary structure, component of the small ribosomal subunit. Part of the small subunit (SSU) processome, composed of more than 70 proteins and the RNA chaperone small nucleolar RNA (snoRNA) U3.

The protein resides in the cytoplasm. Its subcellular location is the nucleus. It localises to the nucleolus. Component of the small ribosomal subunit. The ribosome is a large ribonucleoprotein complex responsible for the synthesis of proteins in the cell. Part of the small subunit (SSU) processome, first precursor of the small eukaryotic ribosomal subunit. During the assembly of the SSU processome in the nucleolus, many ribosome biogenesis factors, an RNA chaperone and ribosomal proteins associate with the nascent pre-rRNA and work in concert to generate RNA folding, modifications, rearrangements and cleavage as well as targeted degradation of pre-ribosomal RNA by the RNA exosome. The sequence is that of Small ribosomal subunit protein uS11 (rps14) from Dictyostelium discoideum (Social amoeba).